The sequence spans 189 residues: Small ribosomal subunit protein uS5 (189 aa).

One can recognise an S5 DRBM domain in the interval 22–85; it reads FVDKLVAINR…EAAKRELIFV (64 aa).

This sequence belongs to the universal ribosomal protein uS5 family. In terms of assembly, part of the 30S ribosomal subunit. Contacts proteins S4 and S8.

Functionally, with S4 and S12 plays an important role in translational accuracy. In terms of biological role, located at the back of the 30S subunit body where it stabilizes the conformation of the head with respect to the body. The sequence is that of Small ribosomal subunit protein uS5 from Rhizobium johnstonii (strain DSM 114642 / LMG 32736 / 3841) (Rhizobium leguminosarum bv. viciae).